The primary structure comprises 323 residues: G patch domain-containing protein 4 (323 aa).

Disordered regions lie at residues 1 to 32, 84 to 110, 124 to 185, and 197 to 323; these read MSAS…GLGR, GVKV…SNRN, PGGE…SAKL, and AKYG…NKSE. 2 stretches are compositionally biased toward basic and acidic residues: residues 9–32 and 84–94; these read SQGR…GLGR and GVKVNRTKDDD. In terms of domain architecture, G-patch spans 11 to 57; the sequence is GRRFAEQQMHKHGWTEGKGLGRRENGISEAIKVKVKCDHAGVGHNSA. Positions 131–141 are enriched in low complexity; it reads KEPSSSESSDS. Residues 252 to 261 show a composition bias toward acidic residues; it reads EREEEEEEES. Over residues 281–291 the composition is skewed to basic residues; sequence SKKKKSKKKHR. The span at 294-306 shows a compositional bias: polar residues; sequence SASPQEEQVTEST. A compositionally biased stretch (basic residues) spans 311–323; the sequence is KPKKKKKKKNKSE.

In Xenopus tropicalis (Western clawed frog), this protein is G patch domain-containing protein 4 (gpatch4).